A 250-amino-acid chain; its full sequence is Triosephosphate isomerase (250 aa).

Residue Asn-9–Lys-11 coordinates substrate. The Electrophile role is filled by His-96. Glu-168 acts as the Proton acceptor in catalysis. Residues Gly-174, Ser-216, and Gly-237–Gly-238 contribute to the substrate site.

It belongs to the triosephosphate isomerase family. Homodimer.

The protein resides in the cytoplasm. The catalysed reaction is D-glyceraldehyde 3-phosphate = dihydroxyacetone phosphate. It functions in the pathway carbohydrate biosynthesis; gluconeogenesis. It participates in carbohydrate degradation; glycolysis; D-glyceraldehyde 3-phosphate from glycerone phosphate: step 1/1. Its function is as follows. Involved in the gluconeogenesis. Catalyzes stereospecifically the conversion of dihydroxyacetone phosphate (DHAP) to D-glyceraldehyde-3-phosphate (G3P). The polypeptide is Triosephosphate isomerase (Leptospira interrogans serogroup Icterohaemorrhagiae serovar copenhageni (strain Fiocruz L1-130)).